Here is a 156-residue protein sequence, read N- to C-terminus: Transcriptional regulator MraZ (156 aa).

2 SpoVT-AbrB domains span residues 7–54 and 84–127; these read NIEV…PESV and VEVV…AKER.

The protein belongs to the MraZ family. Forms oligomers.

Its subcellular location is the cytoplasm. It localises to the nucleoid. The protein is Transcriptional regulator MraZ of Bacteroides thetaiotaomicron (strain ATCC 29148 / DSM 2079 / JCM 5827 / CCUG 10774 / NCTC 10582 / VPI-5482 / E50).